Here is a 135-residue protein sequence, read N- to C-terminus: uncharacterized protein (135 aa).

Residues 1 to 70 (MKPDWPRRGA…RWRPQGTGTG (70 aa)) are disordered.

This is an uncharacterized protein from Homo sapiens (Human).